A 453-amino-acid chain; its full sequence is Chromosomal replication initiator protein DnaA (453 aa).

The segment at 1 to 73 (MSKEEIWDKV…ADLIEKAIGT (73 aa)) is domain I, interacts with DnaA modulators. Residues 73–114 (TKLMPNFVIQEDLTEDKQVKDSAKAKSEAKPDVQAPQNSSED) form a domain II region. Residues 91-103 (VKDSAKAKSEAKP) show a composition bias toward basic and acidic residues. The disordered stretch occupies residues 91–113 (VKDSAKAKSEAKPDVQAPQNSSE). Residues 115 to 331 (QFNVHNTFET…GALTRVIAYS (217 aa)) form a domain III, AAA+ region region. ATP-binding residues include G159, G161, K162, and T163. A domain IV, binds dsDNA region spans residues 332-453 (RLQNEAITTE…ENLEKEIRNQ (122 aa)).

The protein belongs to the DnaA family. As to quaternary structure, oligomerizes as a right-handed, spiral filament on DNA at oriC.

It localises to the cytoplasm. In terms of biological role, plays an essential role in the initiation and regulation of chromosomal replication. ATP-DnaA binds to the origin of replication (oriC) to initiate formation of the DNA replication initiation complex once per cell cycle. Binds the DnaA box (a 9 base pair repeat at the origin) and separates the double-stranded (ds)DNA. Forms a right-handed helical filament on oriC DNA; dsDNA binds to the exterior of the filament while single-stranded (ss)DNA is stabiized in the filament's interior. The ATP-DnaA-oriC complex binds and stabilizes one strand of the AT-rich DNA unwinding element (DUE), permitting loading of DNA polymerase. After initiation quickly degrades to an ADP-DnaA complex that is not apt for DNA replication. Binds acidic phospholipids. This chain is Chromosomal replication initiator protein DnaA, found in Staphylococcus carnosus (strain TM300).